The following is a 712-amino-acid chain: Osmolarity two-component system protein SSK1 (712 aa).

The segment at 73–114 is disordered; sequence ADNTSSNNTNDNSCRSKSNGAGSGANLSVNSNTKSSVSPTAG. A compositionally biased stretch (low complexity) spans 74–85; that stretch reads DNTSSNNTNDNS. A compositionally biased stretch (polar residues) spans 87 to 113; it reads RSKSNGAGSGANLSVNSNTKSSVSPTA. Phosphoserine occurs at positions 110, 195, 327, 351, 368, and 380. A disordered region spans residues 340–362; sequence KADLKGKDGNSSPQEFKLITDEE. The segment at 448–468 is disordered; that stretch reads EVQRRKEDVTPASPILTSSQT. One can recognise a Response regulatory domain in the interval 505–647; that stretch reads NVLIVEDNVI…WLSKKITEWG (143 aa). A 4-aspartylphosphate modification is found at D554. Positions 672-712 are disordered; that stretch reads KSPQKPIAPSNPHSFKQATSMTPTHSPVRKNSNLSPTQIEL. The residue at position 673 (S673) is a Phosphoserine. Positions 682–712 are enriched in polar residues; that stretch reads NPHSFKQATSMTPTHSPVRKNSNLSPTQIEL. Position 693 is a phosphothreonine (T693). S703 and S706 each carry phosphoserine.

This sequence belongs to the SSK1 family. In terms of assembly, interacts with SSK2, SSK22 and YPD1. The phosphorelay mechanism involves the sequential transfer of a phosphate group from 'His-576' (H1) to 'Asp-1144' (D1) of SLN1, then to 'His-64' (H2) of YPD1 and finally to Asp-554 (D2) of SSK1.

It localises to the cytoplasm. Functionally, final receptor of the SLN1-YPD1-SSK1 two-component regulatory system, which controls activity of the HOG1 pathway in response to changes in the osmolarity of the extracellular environment. Under normal osmotic conditions, maintained in a phosphorylated and inactive state by the phosphorelay intermediate protein YPD1. Under conditions of high osmolarity, the histidine kinase SLN1 is no longer active and the unphosphorylated form of SSK1 interacts with and activates SSK2 and SSK22, two MAPKKKs that further stimulate the PBS2-HOG1 MAPKK-MAPK cascade. Unphosphorylated SSK1 is subsequently degraded by the UBC7-dependent ubiquitin-proteasome system to down-regulate the HOG1 pathway after completion of the osmotic adaptation. The chain is Osmolarity two-component system protein SSK1 from Saccharomyces cerevisiae (strain ATCC 204508 / S288c) (Baker's yeast).